The following is a 709-amino-acid chain: MGLNLLPIEMDDIRKRLDREPNEIEWRVIDAVWSEHCSYKSSKIFLKSFSIDSPNVIMGIKDWQDAGAVDIGDGWAIVIKVESHNHPSAIDPFNGAATGVGGIIRDIISKGAKPIALMDMIRVGNLKIRKNVWLLKNIIAGIAAYGNSIGVPVVGGELSFDDTYNDNPLVDVAAIGIVRKDKIKPSIVDKAGLKLVLAGLTGIDGLGGASFASRKLSGEDEIGAVQIADPFAGKIILDVTLEIADKVEAIKDLGGGGLAVAVTEMANGLGAIVDIEKIPLRVKNMNPADVIISETQERMLYAVEEKNVEEVCKAFEEYEYPCSVIGEITSEPIIKFRYFGKDLVSLPTNALLEPPKFLWPIKNVRKNVEEKNVDLPLESTIYTVLSHPDLVSKEWVYSQFDYEVNTSTVVKPGDANGAVVSLPNGKLLAIKADGNPDLCSEDAYECGKGIVAEAYRNLATVGARGMVAVDHLQFGDPKKPEVYYTFVEAIRGIGEATRFFNIPIVGGKVSFYNENSQGKPIKPTPLIVMAGLVQGKLLKNRVEDSSYVVLLGYTRKELGGSLLSKIFKVPSQAPKVRLQEDLLSSEVVIDAINEEKITFAKDISRGGLAASLFNIIVHGYGVEISTKSILSDTDNVVENLFSESSGRFVILTNEPEWIVEKSRSKGIVASIIGKVNKKTSILTIDNTDYDLKTIVNNYFNFLEEVIGNG.

His-36 is an active-site residue. Residues Tyr-39 and Lys-80 each coordinate ATP. Glu-82 provides a ligand contact to Mg(2+). Substrate contacts are provided by residues 83-86 and Arg-105; that span reads SHNH. Residue His-84 is the Proton acceptor of the active site. Asp-106 contributes to the Mg(2+) binding site. Gln-226 provides a ligand contact to substrate. Asp-252 is a Mg(2+) binding site. A substrate-binding site is contributed by 294–296; it reads ETQ. Residues Asp-470 and Gly-507 each coordinate ATP. Ser-510 provides a ligand contact to substrate.

It belongs to the FGAMS family. As to quaternary structure, monomer. Part of the FGAM synthase complex composed of 1 PurL, 1 PurQ and 2 PurS subunits.

It localises to the cytoplasm. The catalysed reaction is N(2)-formyl-N(1)-(5-phospho-beta-D-ribosyl)glycinamide + L-glutamine + ATP + H2O = 2-formamido-N(1)-(5-O-phospho-beta-D-ribosyl)acetamidine + L-glutamate + ADP + phosphate + H(+). It participates in purine metabolism; IMP biosynthesis via de novo pathway; 5-amino-1-(5-phospho-D-ribosyl)imidazole from N(2)-formyl-N(1)-(5-phospho-D-ribosyl)glycinamide: step 1/2. In terms of biological role, part of the phosphoribosylformylglycinamidine synthase complex involved in the purines biosynthetic pathway. Catalyzes the ATP-dependent conversion of formylglycinamide ribonucleotide (FGAR) and glutamine to yield formylglycinamidine ribonucleotide (FGAM) and glutamate. The FGAM synthase complex is composed of three subunits. PurQ produces an ammonia molecule by converting glutamine to glutamate. PurL transfers the ammonia molecule to FGAR to form FGAM in an ATP-dependent manner. PurS interacts with PurQ and PurL and is thought to assist in the transfer of the ammonia molecule from PurQ to PurL. In Saccharolobus islandicus (strain M.14.25 / Kamchatka #1) (Sulfolobus islandicus), this protein is Phosphoribosylformylglycinamidine synthase subunit PurL.